We begin with the raw amino-acid sequence, 180 residues long: Large ribosomal subunit protein uL6 (180 aa).

This sequence belongs to the universal ribosomal protein uL6 family. As to quaternary structure, part of the 50S ribosomal subunit.

Functionally, this protein binds to the 23S rRNA, and is important in its secondary structure. It is located near the subunit interface in the base of the L7/L12 stalk, and near the tRNA binding site of the peptidyltransferase center. The protein is Large ribosomal subunit protein uL6 of Mesoplasma florum (strain ATCC 33453 / NBRC 100688 / NCTC 11704 / L1) (Acholeplasma florum).